The primary structure comprises 238 residues: Probable succinyl-CoA:3-ketoacid coenzyme A transferase subunit A (238 aa).

24-30 (GGFGLCG) contacts CoA.

Belongs to the 3-oxoacid CoA-transferase subunit A family. Heterodimer of a subunit A and a subunit B.

The catalysed reaction is a 3-oxo acid + succinyl-CoA = a 3-oxoacyl-CoA + succinate. The sequence is that of Probable succinyl-CoA:3-ketoacid coenzyme A transferase subunit A (scoA) from Bacillus subtilis (strain 168).